The primary structure comprises 771 residues: Endoplasmin homolog (771 aa).

A signal peptide spans 1–24; it reads MANSSLLRVVLVALLLLGSVTVSA. Positions 63, 109, and 160 each coordinate ATP. Asn63 carries an N-linked (GlcNAc...) asparagine glycan. The tract at residues 253–282 is disordered; sequence TAATPEPAAEEGSLDEGAVEEDPDKEGDTQ. A compositionally biased stretch (acidic residues) spans 260–277; that stretch reads AAEEGSLDEGAVEEDPDK. 2 N-linked (GlcNAc...) asparagine glycosylation sites follow: Asn306 and Asn402. Positions 727–771 are disordered; sequence ADDSLLPPDDAEYTVSDTEAEEEEEQPKVDANADEEAEAVGEDDL. Residues 758 to 771 show a composition bias toward acidic residues; it reads NADEEAEAVGEDDL. The Prevents secretion from ER motif lies at 768 to 771; that stretch reads EDDL.

Belongs to the heat shock protein 90 family. In terms of assembly, homotetramer.

It localises to the endoplasmic reticulum. In terms of biological role, molecular chaperone that functions in the processing and transport of secreted proteins. Required for the synthesis of lipophosphoglycan (LPG), a cell surface glycoconjugate. Necessary for the attachment of the galactosyl residue to the mannose within the phosphoglycan repeats of the nascent LPG chain. Also required for addition of phosphoglycan to acid phosphatase. Not required for normal growth. Has ATPase activity. Binds heparin with micromolar affinity which may facilitate infection of host cells. The polypeptide is Endoplasmin homolog (Leishmania infantum).